We begin with the raw amino-acid sequence, 579 residues long: Arginine--tRNA ligase (579 aa).

The 'HIGH' region signature appears at 127–137; the sequence is PNLAKEMHVGH.

This sequence belongs to the class-I aminoacyl-tRNA synthetase family. Monomer.

It localises to the cytoplasm. It carries out the reaction tRNA(Arg) + L-arginine + ATP = L-arginyl-tRNA(Arg) + AMP + diphosphate. The chain is Arginine--tRNA ligase from Azotobacter vinelandii (strain DJ / ATCC BAA-1303).